The sequence spans 492 residues: Cholesteryl ester transfer protein (492 aa).

The N-terminal stretch at 1-17 (MLAVTLLSLALLGSTCA) is a signal peptide. An intrachain disulfide couples C160 to C201. N-linked (GlcNAc...) asparagine glycosylation occurs at N257.

The protein belongs to the BPI/LBP/Plunc superfamily. BPI/LBP family.

It is found in the secreted. It carries out the reaction cholesteryl (9Z-octadecenoate)(in) = cholesteryl (9Z-octadecenoate)(out). The catalysed reaction is 1,2,3-tri-(9Z-octadecenoyl)-glycerol(in) = 1,2,3-tri-(9Z-octadecenoyl)-glycerol(out). The enzyme catalyses cholesteryl (9Z,12Z)-octadecadienoate(in) = cholesteryl (9Z,12Z)-octadecadienoate(out). Its function is as follows. Involved in the transfer of neutral lipids, including cholesteryl ester and triglyceride, among lipoprotein particles. Allows the net movement of cholesteryl ester from high density lipoproteins/HDL to triglyceride-rich very low density lipoproteins/VLDL, and the equimolar transport of triglyceride from VLDL to HDL. Regulates the reverse cholesterol transport, by which excess cholesterol is removed from peripheral tissues and returned to the liver for elimination. This chain is Cholesteryl ester transfer protein, found in Cricetulus griseus (Chinese hamster).